We begin with the raw amino-acid sequence, 2618 residues long: Mediator of RNA polymerase II transcription subunit 13 (2618 aa).

3 stretches are compositionally biased toward low complexity: residues 232–255 (FAAA…VPNP), 509–519 (TPASGTGSLSA), and 532–543 (DSKQLVQQQIQQ). Disordered regions lie at residues 232–279 (FAAA…AAPP), 509–543 (TPAS…QIQQ), 569–731 (GNTP…SGGP), 916–957 (LNIK…AEGL), 970–995 (TSSN…NGGC), 1036–1055 (TKMF…SSPC), 1268–1384 (PRTP…TGVV), 1521–1557 (ASAS…ITGY), 1614–1633 (SRKN…LDKI), and 1985–2060 (KTLL…GETK). Thr-571 and Thr-575 each carry phosphothreonine. 3 stretches are compositionally biased toward polar residues: residues 581 to 590 (STYSRNSLGG), 634 to 643 (APTSVSNLQQ), and 669 to 681 (SITA…QTPS). Over residues 692-706 (AGGGPAGGQGLGTGP) the composition is skewed to gly residues. The span at 711–723 (AQQPATPTAATSA) shows a compositional bias: low complexity. Residues 939-949 (NSSGGGSGSGG) are compositionally biased toward gly residues. Polar residues predominate over residues 1272–1295 (LTPSTVPQPLSSGGSQYLLNQLNC). Composition is skewed to gly residues over residues 1375–1384 (GLGGGATGVV) and 1528–1538 (AGSGHGHGPNG). Residues 1539–1553 (GSNSSSCTPPSSNPH) are compositionally biased toward low complexity. Over residues 1614-1629 (SRKNQNKQGPGETSSA) the composition is skewed to polar residues. The span at 1993–2014 (GSGNSHSKGGSSCSSNSSSVSG) shows a compositional bias: low complexity. A phosphoserine mark is found at Ser-2472 and Ser-2475.

The protein belongs to the Mediator complex subunit 13 family. Component of the Cdk8 module of the Mediator complex, composed of CycC, Cdk8, kto and skd.

The protein resides in the nucleus. Component of the Mediator complex, a coactivator involved in the regulated transcription of nearly all RNA polymerase II-dependent genes. Mediator functions as a bridge to convey information from gene-specific regulatory proteins to the basal RNA polymerase II transcription machinery. Mediator is recruited to promoters by direct interactions with regulatory proteins and serves as a scaffold for the assembly of a functional preinitiation complex with RNA polymerase II and the general transcription factors. Required for leg and eye development and macrochaete specification or differentiation. Negatively regulates sex comb development. Required for activated transcription of the MtnB and MtnD genes. The chain is Mediator of RNA polymerase II transcription subunit 13 (skd) from Drosophila melanogaster (Fruit fly).